Reading from the N-terminus, the 151-residue chain is Ribosome maturation factor RimP (151 aa).

Belongs to the RimP family.

Its subcellular location is the cytoplasm. Its function is as follows. Required for maturation of 30S ribosomal subunits. This chain is Ribosome maturation factor RimP, found in Desulfotalea psychrophila (strain LSv54 / DSM 12343).